A 242-amino-acid chain; its full sequence is Ras-like protein family member 11A (242 aa).

A small GTPase-like region spans residues 17–241 (ESSSDYLLPK…SSKAKASSAL (225 aa)). Residues 34–41 (GAGCVGKS), 81–88 (DTPGGIQA), and 147–150 (NKGD) each bind GTP.

It belongs to the small GTPase superfamily. Ras family. Interacts with UBF/UBTF.

It localises to the nucleus. Its subcellular location is the nucleolus. The enzyme catalyses GTP + H2O = GDP + phosphate + H(+). Regulator of rDNA transcription. Acts in cooperation UBF/UBTF and positively regulates RNA polymerase I transcription. In Mus musculus (Mouse), this protein is Ras-like protein family member 11A.